The following is a 174-amino-acid chain: Transcription factor bHLH168 (174 aa).

Positions 14-63 (SLREQRNLREKERRMRMKHLFSILSSHVSPTRRLPVPQLIDQAVSYMIQL) constitute a bHLH domain.

Belongs to the bHLH protein family.

It localises to the nucleus. This chain is Transcription factor bHLH168, found in Arabidopsis thaliana (Mouse-ear cress).